Reading from the N-terminus, the 338-residue chain is Heat-inducible transcription repressor HrcA (338 aa).

Belongs to the HrcA family.

In terms of biological role, negative regulator of class I heat shock genes (grpE-dnaK-dnaJ and groELS operons). Prevents heat-shock induction of these operons. The polypeptide is Heat-inducible transcription repressor HrcA (Streptomyces avermitilis (strain ATCC 31267 / DSM 46492 / JCM 5070 / NBRC 14893 / NCIMB 12804 / NRRL 8165 / MA-4680)).